Here is a 59-residue protein sequence, read N- to C-terminus: Large ribosomal subunit protein uL30 (59 aa).

This sequence belongs to the universal ribosomal protein uL30 family. In terms of assembly, part of the 50S ribosomal subunit.

This Ruminiclostridium cellulolyticum (strain ATCC 35319 / DSM 5812 / JCM 6584 / H10) (Clostridium cellulolyticum) protein is Large ribosomal subunit protein uL30.